A 312-amino-acid chain; its full sequence is Olfactory receptor 1500 (312 aa).

The Extracellular segment spans residues 1–25 (MTGNNQTLILEFLLLGLPIPSEYHL). An N-linked (GlcNAc...) asparagine glycan is attached at Asn-5. A helical transmembrane segment spans residues 26–49 (LFYALFLAMYLTIILGNLLIIVLV). Residues 50 to 57 (RLDSHLHM) are Cytoplasmic-facing. Residues 58–79 (PMYLFLSNLSFSDLCFSSVTMP) traverse the membrane as a helical segment. The Extracellular segment spans residues 80–100 (KLLQNMQSQVPSISYTGCLTQ). Cys-97 and Cys-189 are oxidised to a cystine. The helical transmembrane segment at 101–120 (LYFFMVFGDMESFLLVVMAY) threads the bilayer. The Cytoplasmic segment spans residues 121–139 (DRYVAICFPLRYTTIMSTK). The helical transmembrane segment at 140–158 (FCASLVLLLWMLTMTHALL) threads the bilayer. Residues 159–196 (HTLLIARLSFCEKNVILHFFCDISALLKLSCSDIYVNE) are Extracellular-facing. The chain crosses the membrane as a helical span at residues 197-219 (LMIYILGGLIIIIPFLLIVMSYV). Over 220-236 (RIFFSILKFPSIQDIYK) the chain is Cytoplasmic. Residues 237 to 260 (VFSTCGSHLSVVTLFYGTIFGIYL) form a helical membrane-spanning segment. The Extracellular segment spans residues 261–272 (CPSGNNSTVKEI). The chain crosses the membrane as a helical span at residues 273–292 (AMAMMYTVVTPMLNPFIYSL). The Cytoplasmic segment spans residues 293–312 (RNRDMKRALIRVICTKKISL).

It belongs to the G-protein coupled receptor 1 family. As to expression, olfactory epithelium.

The protein localises to the cell membrane. In terms of biological role, odorant receptor. The chain is Olfactory receptor 1500 (Olr1500) from Rattus norvegicus (Rat).